The sequence spans 418 residues: Gamma-glutamyl phosphate reductase (418 aa).

The protein belongs to the gamma-glutamyl phosphate reductase family.

It localises to the cytoplasm. It catalyses the reaction L-glutamate 5-semialdehyde + phosphate + NADP(+) = L-glutamyl 5-phosphate + NADPH + H(+). It functions in the pathway amino-acid biosynthesis; L-proline biosynthesis; L-glutamate 5-semialdehyde from L-glutamate: step 2/2. Functionally, catalyzes the NADPH-dependent reduction of L-glutamate 5-phosphate into L-glutamate 5-semialdehyde and phosphate. The product spontaneously undergoes cyclization to form 1-pyrroline-5-carboxylate. The protein is Gamma-glutamyl phosphate reductase of Nitrosococcus oceani (strain ATCC 19707 / BCRC 17464 / JCM 30415 / NCIMB 11848 / C-107).